Here is a 590-residue protein sequence, read N- to C-terminus: MATIEEIAHQIIDQQMGEIVTEQQTGQKIQIVTALDHSTQGKQFILANHEGSTPGKVFLTTPDAAGVNQLFFASPDLSTPHLQLLTENSPDQGPNKVFDLCVVCGDKASGRHYGAITCEGCKGFFKRSIRKNLVYSCRGSKDCIINKHHRNRCQYCRLQRCIAFGMKQDSVQCERKPIEVSREKSSNCAASTEKIYIRKDLRSPLAATPTFVTDSETARSTGLLDSGMFVNIHPSGIKTEPALLMTPDKAESCQGDLGTLASVVTSLANLGKAKDLSHCGGDLPVVQSLRNGDTSFGAFHQDIQTNGDVSRAFDNLAKALTPGENPACQSPGESMEGSTHLIAGEPSCMEREGPLLSDSHVVFRLTMPSPMPEYLNVHYIGESASRLLFLSMHWALSIPSFQALGQENSISLVKAYWNELFTLGLAQCWQVMNVATILATFVNCLHNSLQQDKMSPERRKLLMEHIFKLQEFCNSMVKLCIDGHEYAYLKAIVLFSPDHPGLENMELIEKFQEKAYVEFQDYITRTYPDDTYRLSRLLLRLPALRLMNATITEELFFKGLIGNVRIDSVIPHILKMEPADYNSQIIGHSL.

Positions 1–166 (MATIEEIAHQ…RLQRCIAFGM (166 aa)) are required for interaction with KAT2B. The nuclear receptor DNA-binding region spans 98 to 173 (FDLCVVCGDK…FGMKQDSVQC (76 aa)). 2 consecutive NR C4-type zinc fingers follow at residues 101 to 121 (CVVCGDKASGRHYGAITCEGC) and 137 to 156 (CRGSKDCIINKHHRNRCQYC). Phosphoserine is present on residues S185 and S203. T208 carries the post-translational modification Phosphothreonine. Phosphothreonine; by MAPK1 is present on T210. K238 participates in a covalent cross-link: Glycyl lysine isopeptide (Lys-Gly) (interchain with G-Cter in SUMO); alternate. Residue K238 forms a Glycyl lysine isopeptide (Lys-Gly) (interchain with G-Cter in SUMO2); alternate linkage. Residues 333-577 (ESMEGSTHLI…SVIPHILKME (245 aa)) form the NR LBD domain. S568 carries the phosphoserine; by PKC modification. The tract at residues 571–590 (PHILKMEPADYNSQIIGHSL) is required for interaction with NRIP1. Residue K575 forms a Glycyl lysine isopeptide (Lys-Gly) (interchain with G-Cter in SUMO2) linkage.

Belongs to the nuclear hormone receptor family. NR2 subfamily. In terms of assembly, homodimer. Heterodimer; with NR2C2 which is required for chromatin remodeling and for binding to promoter regions such as globin DR1 repeats. Interacts with ESR1; the interaction prevents homodimerization of ESR1 and suppresses its transcriptional activity and cell growth. Interacts with NRIP1 (via its LXXLL motifs); the interaction provides corepressor activity. Interacts with HDAC3 (via the DNA-binding domain); the interaction recruits phosphorylated NR2C1 to PML bodies for sumoylation. Interacts with HDAC4 (via the DNA-binding domain). Interacts with PIAS1; the interaction is required for sumoylation of NR2C1. Interacts with UBE2I; the interaction is required for sumoylation of NR2C1. Interacts with KAT2B; the interaction acts as a corepressor of gene expression. Post-translationally, sumoylation requires both PIAS1 and UBE2I. Sumoylation appears to dissociate NR2C1 from the PML nuclear bodies. Enhances the interaction with NRIP1 but inhibits interaction with KAT2B. In proliferating cells, stimulation by all-trans retinoic acid, activation of MAPK1-mediated phosphorylation and recruitment to PML bodies with subsequent sumoylation, suppresses OCT4 expression. Phosphorylated on several serine and threonine residues. Phosphorylation on Thr-210, stimulated by all-trans retinoic acid (atRA) mediates PML location and sumoylation in proliferating cells which then modulates its association with effector molecules, KAT2B and NRIP1. Phosphorylation on Ser-568 by PKC is important for protein stability and function as activator of RARB.

Its subcellular location is the nucleus. It localises to the PML body. Orphan nuclear receptor. Binds the IR7 element in the promoter of its own gene in an autoregulatory negative feedback mechanism. Primarily repressor of a broad range of genes including ESR1 and RARB. Together with NR2C2, forms the core of the DRED (direct repeat erythroid-definitive) complex that represses embryonic and fetal globin transcription. Binds to hormone response elements (HREs) consisting of two 5'-AGGTCA-3' half site direct repeat consensus sequences. Also activator of OCT4 gene expression. Plays a fundamental role in early embryogenesis and regulates embryonic stem cell proliferation and differentiation. Mediator of retinoic acid-regulated preadipocyte proliferation. This is Nuclear receptor subfamily 2 group C member 1 (Nr2c1) from Rattus norvegicus (Rat).